The chain runs to 139 residues: ATP synthase epsilon chain (139 aa).

A disordered region spans residues 89 to 110; it reads EARAEQARAEAEARRREAQSER.

It belongs to the ATPase epsilon chain family. F-type ATPases have 2 components, CF(1) - the catalytic core - and CF(0) - the membrane proton channel. CF(1) has five subunits: alpha(3), beta(3), gamma(1), delta(1), epsilon(1). CF(0) has three main subunits: a, b and c.

It localises to the cell membrane. Produces ATP from ADP in the presence of a proton gradient across the membrane. The protein is ATP synthase epsilon chain of Chloroflexus aurantiacus (strain ATCC 29366 / DSM 635 / J-10-fl).